Reading from the N-terminus, the 215-residue chain is MSADRHYSPIDRFLLQADSALRTLLPFSGQPARPSPAIVEPDGELSEEDTRHIAGLMRINHTGEVCAQALYQGQSLTAKLPEVREAMEEAAEEEIDHLAWCEQRIRQLGSRPSVLNPIFYGLSFGVGAAAGLVSDRVSLGFVAATEDQVCKHLDEHLAQIPQEDRKSRAILEQMRIDEEQHSSNALAAGGLRFPAPVKLGMSLLAKVMTKSTYRI.

The Fe cation site is built by Glu-64, Glu-94, His-97, Glu-146, Glu-178, and His-181.

It belongs to the COQ7 family. The cofactor is Fe cation.

It is found in the cell membrane. It carries out the reaction a 5-methoxy-2-methyl-3-(all-trans-polyprenyl)benzene-1,4-diol + AH2 + O2 = a 3-demethylubiquinol + A + H2O. It functions in the pathway cofactor biosynthesis; ubiquinone biosynthesis. Its function is as follows. Catalyzes the hydroxylation of 2-nonaprenyl-3-methyl-6-methoxy-1,4-benzoquinol during ubiquinone biosynthesis. This is 3-demethoxyubiquinol 3-hydroxylase from Pseudomonas aeruginosa (strain LESB58).